Consider the following 179-residue polypeptide: ATP synthase subunit delta (179 aa).

The protein belongs to the ATPase delta chain family. In terms of assembly, F-type ATPases have 2 components, F(1) - the catalytic core - and F(0) - the membrane proton channel. F(1) has five subunits: alpha(3), beta(3), gamma(1), delta(1), epsilon(1). F(0) has three main subunits: a(1), b(2) and c(10-14). The alpha and beta chains form an alternating ring which encloses part of the gamma chain. F(1) is attached to F(0) by a central stalk formed by the gamma and epsilon chains, while a peripheral stalk is formed by the delta and b chains.

Its subcellular location is the cell inner membrane. Functionally, f(1)F(0) ATP synthase produces ATP from ADP in the presence of a proton or sodium gradient. F-type ATPases consist of two structural domains, F(1) containing the extramembraneous catalytic core and F(0) containing the membrane proton channel, linked together by a central stalk and a peripheral stalk. During catalysis, ATP synthesis in the catalytic domain of F(1) is coupled via a rotary mechanism of the central stalk subunits to proton translocation. Its function is as follows. This protein is part of the stalk that links CF(0) to CF(1). It either transmits conformational changes from CF(0) to CF(1) or is implicated in proton conduction. The chain is ATP synthase subunit delta from Anaeromyxobacter dehalogenans (strain 2CP-1 / ATCC BAA-258).